Consider the following 178-residue polypeptide: tRNA (cytidine(56)-2'-O)-methyltransferase (178 aa).

S-adenosyl-L-methionine-binding positions include L84, 112–116 (GAEKV), and 130–137 (VGNQPHSE).

This sequence belongs to the aTrm56 family. In terms of assembly, homodimer.

Its subcellular location is the cytoplasm. The catalysed reaction is cytidine(56) in tRNA + S-adenosyl-L-methionine = 2'-O-methylcytidine(56) in tRNA + S-adenosyl-L-homocysteine + H(+). Its function is as follows. Specifically catalyzes the AdoMet-dependent 2'-O-ribose methylation of cytidine at position 56 in tRNAs. In Methanocella arvoryzae (strain DSM 22066 / NBRC 105507 / MRE50), this protein is tRNA (cytidine(56)-2'-O)-methyltransferase.